Reading from the N-terminus, the 60-residue chain is Cytotoxin 1 (60 aa).

Disulfide bonds link cysteine 3–cysteine 21, cysteine 14–cysteine 38, cysteine 42–cysteine 53, and cysteine 54–cysteine 59.

Belongs to the three-finger toxin family. Short-chain subfamily. Type IA cytotoxin sub-subfamily. Monomer in solution; Homodimer and oligomer in the presence of negatively charged lipids forming a pore with a size ranging between 20 and 30 Angstroms. Expressed by the venom gland.

Its subcellular location is the secreted. It localises to the target cell membrane. Shows cytolytic activity on many different cells by forming pore in lipid membranes. In vivo, increases heart rate or kills the animal by cardiac arrest. In addition, it binds to heparin with high affinity, interacts with Kv channel-interacting protein 1 (KCNIP1) in a calcium-independent manner, and binds to integrin alpha-V/beta-3 (ITGAV/ITGB3) with moderate affinity. This is Cytotoxin 1 from Naja naja (Indian cobra).